Here is a 201-residue protein sequence, read N- to C-terminus: Probable chemoreceptor glutamine deamidase CheD 1 (201 aa).

This sequence belongs to the CheD family.

The enzyme catalyses L-glutaminyl-[protein] + H2O = L-glutamyl-[protein] + NH4(+). In terms of biological role, probably deamidates glutamine residues to glutamate on methyl-accepting chemotaxis receptors (MCPs), playing an important role in chemotaxis. The sequence is that of Probable chemoreceptor glutamine deamidase CheD 1 from Dechloromonas aromatica (strain RCB).